The following is a 336-amino-acid chain: tRNA N6-adenosine threonylcarbamoyltransferase (336 aa).

Residues H114 and H118 each coordinate Fe cation. Residues 136–140 (LVSGG), D169, G182, D186, and N275 each bind substrate. D301 is a binding site for Fe cation.

It belongs to the KAE1 / TsaD family. It depends on Fe(2+) as a cofactor.

The protein localises to the cytoplasm. It catalyses the reaction L-threonylcarbamoyladenylate + adenosine(37) in tRNA = N(6)-L-threonylcarbamoyladenosine(37) in tRNA + AMP + H(+). Required for the formation of a threonylcarbamoyl group on adenosine at position 37 (t(6)A37) in tRNAs that read codons beginning with adenine. Is involved in the transfer of the threonylcarbamoyl moiety of threonylcarbamoyl-AMP (TC-AMP) to the N6 group of A37, together with TsaE and TsaB. TsaD likely plays a direct catalytic role in this reaction. The sequence is that of tRNA N6-adenosine threonylcarbamoyltransferase from Streptococcus pneumoniae (strain P1031).